The chain runs to 159 residues: ATP synthase subunit b', chloroplastic (159 aa).

A helical membrane pass occupies residues leucine 30–tyrosine 47.

Belongs to the ATPase B chain family. In terms of assembly, F-type ATPases have 2 components, F(1) - the catalytic core - and F(0) - the membrane proton channel. F(1) has five subunits: alpha(3), beta(3), gamma(1), delta(1), epsilon(1). F(0) has four main subunits: a(1), b(1), b'(1) and c(10-14). The alpha and beta chains form an alternating ring which encloses part of the gamma chain. F(1) is attached to F(0) by a central stalk formed by the gamma and epsilon chains, while a peripheral stalk is formed by the delta, b and b' chains.

It localises to the plastid. Its subcellular location is the chloroplast thylakoid membrane. Its function is as follows. F(1)F(0) ATP synthase produces ATP from ADP in the presence of a proton or sodium gradient. F-type ATPases consist of two structural domains, F(1) containing the extramembraneous catalytic core and F(0) containing the membrane proton channel, linked together by a central stalk and a peripheral stalk. During catalysis, ATP synthesis in the catalytic domain of F(1) is coupled via a rotary mechanism of the central stalk subunits to proton translocation. Component of the F(0) channel, it forms part of the peripheral stalk, linking F(1) to F(0). The b'-subunit is a diverged and duplicated form of b found in plants and photosynthetic bacteria. This is ATP synthase subunit b', chloroplastic from Antithamnion sp. (Red alga).